Reading from the N-terminus, the 310-residue chain is Epoxyqueuosine reductase (310 aa).

The active-site Proton donor is the aspartate 133. A 4Fe-4S ferredoxin-type domain is found at 179–208 (YDNPSDKDYCGTCTRCVDACPTDAILQDNL). Residues cysteine 188, cysteine 191, cysteine 194, cysteine 198, cysteine 214, cysteine 241, cysteine 244, and cysteine 248 each coordinate [4Fe-4S] cluster.

Belongs to the QueG family. In terms of assembly, monomer. Requires cob(II)alamin as cofactor. It depends on [4Fe-4S] cluster as a cofactor.

It is found in the cytoplasm. The catalysed reaction is epoxyqueuosine(34) in tRNA + AH2 = queuosine(34) in tRNA + A + H2O. The protein operates within tRNA modification; tRNA-queuosine biosynthesis. Functionally, catalyzes the conversion of epoxyqueuosine (oQ) to queuosine (Q), which is a hypermodified base found in the wobble positions of tRNA(Asp), tRNA(Asn), tRNA(His) and tRNA(Tyr). The sequence is that of Epoxyqueuosine reductase from Cyclobacterium marinum (strain ATCC 25205 / DSM 745 / LMG 13164 / NCIMB 1802) (Flectobacillus marinus).